We begin with the raw amino-acid sequence, 38 residues long: Photosystem I reaction center subunit VIII (38 aa).

Residues 12-32 traverse the membrane as a helical segment; the sequence is WILIPIIGWLMPAVVMGLLFL.

It belongs to the PsaI family.

The protein localises to the cellular thylakoid membrane. Its function is as follows. May help in the organization of the PsaL subunit. In Gloeothece citriformis (strain PCC 7424) (Cyanothece sp. (strain PCC 7424)), this protein is Photosystem I reaction center subunit VIII.